Reading from the N-terminus, the 1393-residue chain is DNA-directed RNA polymerase subunit beta' (1393 aa).

4 residues coordinate Zn(2+): cysteine 72, cysteine 74, cysteine 87, and cysteine 90. Residues aspartate 463, aspartate 465, and aspartate 467 each coordinate Mg(2+). 4 residues coordinate Zn(2+): cysteine 812, cysteine 887, cysteine 894, and cysteine 897.

The protein belongs to the RNA polymerase beta' chain family. In terms of assembly, the RNAP catalytic core consists of 2 alpha, 1 beta, 1 beta' and 1 omega subunit. When a sigma factor is associated with the core the holoenzyme is formed, which can initiate transcription. It depends on Mg(2+) as a cofactor. Requires Zn(2+) as cofactor.

The enzyme catalyses RNA(n) + a ribonucleoside 5'-triphosphate = RNA(n+1) + diphosphate. In terms of biological role, DNA-dependent RNA polymerase catalyzes the transcription of DNA into RNA using the four ribonucleoside triphosphates as substrates. The protein is DNA-directed RNA polymerase subunit beta' of Chlamydia pneumoniae (Chlamydophila pneumoniae).